We begin with the raw amino-acid sequence, 305 residues long: MSASVQSWTDRLDGKQAADVSALLERATAADGTAPVSEQGVHAVSGAGSDGVRHLVETDADRIVGYAQLQPGRGDHPAMAELAVDPAARGRGIGGRLVAEVLSEGGPDARVWAHGNLPAAQAVAQRLGLIGARELLQLRRPLADAELPELVVPEDISLRVYRGVEDDPEVLRVNAAAFAWHPEQGSWTERELAERRAEAWFDPSGLFMAFAASDDQRLLGFHWTKVHPKQGDEPAIGEVYVVAIGPDAQGRGLGRLLTLAGLHYLRDRGLGAVLLYVEGDNESALHTYDRLGFERFHTDVAYARA.

N-acetyltransferase domains lie at 10-153 (DRLD…LVVP) and 156-305 (ISLR…YARA). Position 38 (Glu-38) interacts with 1D-myo-inositol 2-(L-cysteinylamino)-2-deoxy-alpha-D-glucopyranoside. 82-84 (LAV) is a binding site for acetyl-CoA. 3 residues coordinate 1D-myo-inositol 2-(L-cysteinylamino)-2-deoxy-alpha-D-glucopyranoside: Glu-183, Lys-225, and Glu-238. Acetyl-CoA-binding positions include 242–244 (VAI) and 249–255 (QGRGLGR). A 1D-myo-inositol 2-(L-cysteinylamino)-2-deoxy-alpha-D-glucopyranoside-binding site is contributed by Tyr-276. 281–286 (NESALH) provides a ligand contact to acetyl-CoA.

It belongs to the acetyltransferase family. MshD subfamily. As to quaternary structure, monomer.

It carries out the reaction 1D-myo-inositol 2-(L-cysteinylamino)-2-deoxy-alpha-D-glucopyranoside + acetyl-CoA = mycothiol + CoA + H(+). In terms of biological role, catalyzes the transfer of acetyl from acetyl-CoA to desacetylmycothiol (Cys-GlcN-Ins) to form mycothiol. The chain is Mycothiol acetyltransferase from Rhodococcus jostii (strain RHA1).